A 517-amino-acid chain; its full sequence is Cytochrome b mRNA maturase bI3 (517 aa).

Residues methionine 1–asparagine 31 lie on the Mitochondrial matrix side of the membrane. Residues methionine 1 to phenylalanine 169 are cytochrome b. Residues methionine 32–methionine 52 traverse the membrane as a helical segment. The Mitochondrial intermembrane segment spans residues histidine 53 to asparagine 84. Residues glycine 85 to serine 105 form a helical membrane-spanning segment. At tyrosine 106–asparagine 115 the chain is on the mitochondrial matrix side. The chain crosses the membrane as a helical span at residues valine 116–tyrosine 136. The Mitochondrial intermembrane portion of the chain corresponds to glycine 137–threonine 145. A helical membrane pass occupies residues valine 146–tryptophan 166. Over glycine 167–serine 184 the chain is Mitochondrial matrix. The maturase stretch occupies residues asparagine 170 to tyrosine 517. The helical transmembrane segment at valine 185–tyrosine 205 threads the bilayer. Residues asparagine 206–lysine 224 lie on the Mitochondrial intermembrane side of the membrane. A helical membrane pass occupies residues leucine 225–tyrosine 242. Over serine 243 to tyrosine 517 the chain is Mitochondrial matrix.

This sequence in the N-terminal section; belongs to the cytochrome b family. It in the C-terminal section; belongs to the LAGLIDADG endonuclease family. As to quaternary structure, forms a ribonucleoprotein complex composed of maturase bI3 and 2 dimers of MRS1 that assemble around the bI3 RNA.

It localises to the mitochondrion inner membrane. Mitochondrial mRNA maturase required for splicing of intron 3 of the cytochrome b (COB) gene, containing its own coding sequence. In vivo splicing requires the formation of a ribonucleoprotein complex together with the imported mitochondrial RNA-splicing protein MRS1. The complex seems to stimulate the intrinsic ribozyme activity of intron bI3 through binding to and stabilizing specific secondary and tertiary structure elements in the RNA. The chain is Cytochrome b mRNA maturase bI3 (BI3) from Saccharomyces cerevisiae (strain ATCC 204508 / S288c) (Baker's yeast).